We begin with the raw amino-acid sequence, 812 residues long: Valine--tRNA ligase (812 aa).

The 'HIGH' region signature appears at 47-57; sequence PTISGQLHIGH. Residues 536–540 carry the 'KMSKS' region motif; it reads KMSKS. K539 is a binding site for ATP.

It belongs to the class-I aminoacyl-tRNA synthetase family. ValS type 2 subfamily. In terms of assembly, monomer.

Its subcellular location is the cytoplasm. It catalyses the reaction tRNA(Val) + L-valine + ATP = L-valyl-tRNA(Val) + AMP + diphosphate. Functionally, catalyzes the attachment of valine to tRNA(Val). As ValRS can inadvertently accommodate and process structurally similar amino acids such as threonine, to avoid such errors, it has a 'posttransfer' editing activity that hydrolyzes mischarged Thr-tRNA(Val) in a tRNA-dependent manner. The polypeptide is Valine--tRNA ligase (Ehrlichia ruminantium (strain Gardel)).